We begin with the raw amino-acid sequence, 250 residues long: 5'-nucleotidase SurE (250 aa).

Positions 8, 9, 40, and 94 each coordinate a divalent metal cation.

The protein belongs to the SurE nucleotidase family. The cofactor is a divalent metal cation.

It localises to the cytoplasm. It catalyses the reaction a ribonucleoside 5'-phosphate + H2O = a ribonucleoside + phosphate. In terms of biological role, nucleotidase that shows phosphatase activity on nucleoside 5'-monophosphates. The chain is 5'-nucleotidase SurE from Wolbachia sp. subsp. Drosophila simulans (strain wRi).